The following is a 2890-amino-acid chain: Bifunctional DNA-directed RNA polymerase subunit beta-beta' (2890 aa).

The tract at residues 1–1377 is DNA-directed RNA polymerase subunit beta; it reads MSKKIPLKNR…DINIFGDDVD (1377 aa). The tract at residues 1384–2890 is DNA-directed RNA polymerase subunit beta'; the sequence is PIVIKEDDRP…LRTLEDGPKF (1507 aa). Zn(2+)-binding residues include C1449, C1451, C1465, and C1468. Mg(2+) is bound by residues D1849, D1851, and D1853. C2179, C2253, C2260, and C2263 together coordinate Zn(2+).

The protein in the N-terminal section; belongs to the RNA polymerase beta chain family. In the C-terminal section; belongs to the RNA polymerase beta' chain family. The RNAP catalytic core consists of 2 alpha, 1 beta/beta' and 1 omega subunit. When a sigma factor is associated with the core the holoenzyme is formed, which can initiate transcription. Requires Mg(2+) as cofactor. Zn(2+) serves as cofactor.

It catalyses the reaction RNA(n) + a ribonucleoside 5'-triphosphate = RNA(n+1) + diphosphate. Its function is as follows. DNA-dependent RNA polymerase catalyzes the transcription of DNA into RNA using the four ribonucleoside triphosphates as substrates. In Helicobacter pylori (strain HPAG1), this protein is Bifunctional DNA-directed RNA polymerase subunit beta-beta' (rpoBC).